The chain runs to 146 residues: Large ribosomal subunit protein uL15 (146 aa).

The disordered stretch occupies residues 1 to 56 (MKLHELKAAEGANKASKRVGRGTGSGLGKTSGKGQNGQNSRSGGGVRPGFEGGQMP). 2 stretches are compositionally biased toward gly residues: residues 21–35 (RGTG…GKGQ) and 42–52 (SGGGVRPGFEG).

This sequence belongs to the universal ribosomal protein uL15 family. In terms of assembly, part of the 50S ribosomal subunit.

Functionally, binds to the 23S rRNA. The chain is Large ribosomal subunit protein uL15 from Clostridium botulinum (strain Langeland / NCTC 10281 / Type F).